Reading from the N-terminus, the 650-residue chain is Methionine--tRNA ligase (650 aa).

The short motif at 11–21 is the 'HIGH' region element; that stretch reads YYVNDIPHIGH. Zn(2+)-binding residues include cysteine 126, cysteine 129, cysteine 147, and cysteine 150. Positions 301–305 match the 'KMSKS' region motif; the sequence is KMSKS. Lysine 304 is an ATP binding site. Residues 513–535 form a disordered region; that stretch reads EKTEKAGEASPEKNEKEKKDAKE. In terms of domain architecture, tRNA-binding spans 549 to 650; it reads DFKKVEIKVG…REKIAGSLIS (102 aa).

Belongs to the class-I aminoacyl-tRNA synthetase family. MetG type 2A subfamily. Homodimer. Requires Zn(2+) as cofactor.

Its subcellular location is the cytoplasm. The enzyme catalyses tRNA(Met) + L-methionine + ATP = L-methionyl-tRNA(Met) + AMP + diphosphate. In terms of biological role, is required not only for elongation of protein synthesis but also for the initiation of all mRNA translation through initiator tRNA(fMet) aminoacylation. In Helicobacter pylori (strain ATCC 700392 / 26695) (Campylobacter pylori), this protein is Methionine--tRNA ligase (metG).